The sequence spans 745 residues: Bacteriophage N4 adsorption protein B (745 aa).

The next 3 helical transmembrane spans lie at 8–28, 362–382, and 393–413; these read FATW…IMFI, ISNF…LLLA, and FLSI…NFGL.

Its subcellular location is the cell inner membrane. Required for bacteriophage N4 adsorption. May be a component of the phage receptor. The chain is Bacteriophage N4 adsorption protein B (nfrB) from Escherichia coli O157:H7.